A 513-amino-acid polypeptide reads, in one-letter code: Tigger transposable element-derived protein 4 (513 aa).

One can recognise an HTH psq-type domain in the interval 12–63; it reads PVTVKKKKSLSIEEKIDIINAVESGKKKAEIAAEYGIKKNSLSSIMKNKDKV. 2 consecutive DNA-binding regions (H-T-H motif) follow at residues 39–59 and 108–139; these read KAEI…IMKN and PMLR…FKSR. The HTH CENPB-type domain occupies 75 to 146; that stretch reads KRKRLRTAFY…KSRYGLVFRA (72 aa). The region spanning 174-375 is the DDE-1 domain; it reads YHPKNVFNVK…VTPETIVKSY (202 aa). Residues 433-448 are compositionally biased toward basic and acidic residues; it reads TQKDDAEWAGESKQDE. The segment at 433 to 473 is disordered; it reads TQKDDAEWAGESKQDETGLYTSDEEEEDSGALEVDLPSPSK.

This sequence belongs to the tigger transposable element derived protein family.

The protein localises to the nucleus. In Mus musculus (Mouse), this protein is Tigger transposable element-derived protein 4 (Tigd4).